The sequence spans 266 residues: Glucosamine-6-phosphate deaminase (266 aa).

D72 acts as the Proton acceptor; for enolization step in catalysis. D141 functions as the For ring-opening step in the catalytic mechanism. H143 acts as the Proton acceptor; for ring-opening step in catalysis. E148 functions as the For ring-opening step in the catalytic mechanism.

It belongs to the glucosamine/galactosamine-6-phosphate isomerase family. NagB subfamily. Homohexamer; trimer of disulfide-linked dimers.

The catalysed reaction is alpha-D-glucosamine 6-phosphate + H2O = beta-D-fructose 6-phosphate + NH4(+). Its pathway is amino-sugar metabolism; N-acetylneuraminate degradation; D-fructose 6-phosphate from N-acetylneuraminate: step 5/5. With respect to regulation, allosterically activated by N-acetylglucosamine 6-phosphate (GlcNAc6P). Catalyzes the reversible isomerization-deamination of glucosamine 6-phosphate (GlcN6P) to form fructose 6-phosphate (Fru6P) and ammonium ion. This is Glucosamine-6-phosphate deaminase from Shigella boydii serotype 18 (strain CDC 3083-94 / BS512).